Consider the following 167-residue polypeptide: Photosystem I assembly protein Ycf3 (167 aa).

3 TPR repeats span residues 35–68 (AFSYYRDGMSAQSEGEYAEALQNYYEALRLETDA), 72–105 (SYILYNIGLIHTSNGDHARALDYYYQALERNPSL), and 120–153 (GEQALESSQTEISKLLFDKAADYWREAIRLAPTN).

This sequence belongs to the Ycf3 family.

Its subcellular location is the plastid. The protein localises to the chloroplast thylakoid membrane. Functionally, essential for the assembly of the photosystem I (PSI) complex. May act as a chaperone-like factor to guide the assembly of the PSI subunits. This Chlorella vulgaris (Green alga) protein is Photosystem I assembly protein Ycf3.